The sequence spans 683 residues: Rhophilin-2-A (683 aa).

An REM-1 domain is found at 25 to 99 (KSIAQTGRSK…LERLNISVEV (75 aa)). A BRO1 domain is found at 110–501 (PLIPLGLKET…TDIFQRLGPL (392 aa)). Residues 515-592 (KICITKEDGD…QSIEIQVISI (78 aa)) enclose the PDZ domain.

The protein belongs to the RHPN family. Interacts with RhoA.

It is found in the cytoplasm. The protein localises to the perinuclear region. In terms of biological role, binds specifically to GTP-Rho. The chain is Rhophilin-2-A (rhpn2-a) from Xenopus laevis (African clawed frog).